The following is a 1072-amino-acid chain: DNA-directed RNA polymerase subunit beta (1072 aa).

The protein belongs to the RNA polymerase beta chain family. In terms of assembly, in plastids the minimal PEP RNA polymerase catalytic core is composed of four subunits: alpha, beta, beta', and beta''. When a (nuclear-encoded) sigma factor is associated with the core the holoenzyme is formed, which can initiate transcription.

It is found in the plastid. It localises to the chloroplast. It carries out the reaction RNA(n) + a ribonucleoside 5'-triphosphate = RNA(n+1) + diphosphate. Its function is as follows. DNA-dependent RNA polymerase catalyzes the transcription of DNA into RNA using the four ribonucleoside triphosphates as substrates. In Olimarabidopsis pumila (Dwarf rocket), this protein is DNA-directed RNA polymerase subunit beta.